A 291-amino-acid chain; its full sequence is tRNA U34 carboxymethyltransferase (291 aa).

Carboxy-S-adenosyl-L-methionine-binding positions include K61, W75, K80, G100, 122-124 (DPS), 149-150 (VE), Y169, and R284.

The protein belongs to the class I-like SAM-binding methyltransferase superfamily. CmoB family. Homotetramer.

The enzyme catalyses carboxy-S-adenosyl-L-methionine + 5-hydroxyuridine(34) in tRNA = 5-carboxymethoxyuridine(34) in tRNA + S-adenosyl-L-homocysteine + H(+). In terms of biological role, catalyzes carboxymethyl transfer from carboxy-S-adenosyl-L-methionine (Cx-SAM) to 5-hydroxyuridine (ho5U) to form 5-carboxymethoxyuridine (cmo5U) at position 34 in tRNAs. This is tRNA U34 carboxymethyltransferase from Campylobacter jejuni subsp. jejuni serotype O:6 (strain 81116 / NCTC 11828).